We begin with the raw amino-acid sequence, 333 residues long: Foldase protein PrsA (333 aa).

Residues 1–21 form the signal peptide; that stretch reads MKKRTIATGLVTLLSIVTLAA. Residue Cys22 is the site of N-palmitoyl cysteine attachment. Residue Cys22 is the site of S-diacylglycerol cysteine attachment. One can recognise a PpiC domain in the interval 144 to 237; that stretch reads KPEVTAQVIQ…PVYYIVKITK (94 aa). The tract at residues 296–333 is disordered; the sequence is AASGSGSSGSTTTTTAASSAATTAADDQTTAAETTAAE.

This sequence belongs to the PrsA family.

It is found in the cell membrane. The catalysed reaction is [protein]-peptidylproline (omega=180) = [protein]-peptidylproline (omega=0). Plays a major role in protein secretion by helping the post-translocational extracellular folding of several secreted proteins. This Streptococcus mutans serotype c (strain ATCC 700610 / UA159) protein is Foldase protein PrsA.